A 278-amino-acid chain; its full sequence is Methyltransferase GfsG (278 aa).

S-adenosyl-L-methionine is bound by residues Q105 and 128-129 (DA). E146 acts as the Proton acceptor in catalysis. H150 contacts S-adenosyl-L-methionine.

This sequence belongs to the methyltransferase superfamily.

The protein operates within antibiotic biosynthesis. Functionally, methylase required for synthesis of the 16-membered macrolide antibiotics FD-891 and FD-892. In vitro uses S-adenosyl-L-methionine to methylate a number of biosynthetic intermediates in the synthesis of FD-891. The chain is Methyltransferase GfsG from Streptomyces halstedii.